The following is a 153-amino-acid chain: ATP synthase subunit b' (153 aa).

Residues 20–40 form a helical membrane-spanning segment; sequence TLPLMAVQVVLLTFILNALFF.

It belongs to the ATPase B chain family. F-type ATPases have 2 components, F(1) - the catalytic core - and F(0) - the membrane proton channel. F(1) has five subunits: alpha(3), beta(3), gamma(1), delta(1), epsilon(1). F(0) has four main subunits: a(1), b(1), b'(1) and c(10-14). The alpha and beta chains form an alternating ring which encloses part of the gamma chain. F(1) is attached to F(0) by a central stalk formed by the gamma and epsilon chains, while a peripheral stalk is formed by the delta, b and b' chains.

Its subcellular location is the cellular thylakoid membrane. Its function is as follows. F(1)F(0) ATP synthase produces ATP from ADP in the presence of a proton or sodium gradient. F-type ATPases consist of two structural domains, F(1) containing the extramembraneous catalytic core and F(0) containing the membrane proton channel, linked together by a central stalk and a peripheral stalk. During catalysis, ATP synthesis in the catalytic domain of F(1) is coupled via a rotary mechanism of the central stalk subunits to proton translocation. In terms of biological role, component of the F(0) channel, it forms part of the peripheral stalk, linking F(1) to F(0). The b'-subunit is a diverged and duplicated form of b found in plants and photosynthetic bacteria. The polypeptide is ATP synthase subunit b' (Prochlorococcus marinus (strain MIT 9211)).